The primary structure comprises 59 residues: Large ribosomal subunit protein uL30 (59 aa).

This sequence belongs to the universal ribosomal protein uL30 family. As to quaternary structure, part of the 50S ribosomal subunit.

The sequence is that of Large ribosomal subunit protein uL30 from Stutzerimonas stutzeri (strain A1501) (Pseudomonas stutzeri).